The primary structure comprises 252 residues: tRNA (guanine-N(7)-)-methyltransferase (252 aa).

The S-adenosyl-L-methionine site is built by glutamate 51, aspartate 76, asparagine 103, and aspartate 125. Aspartate 125 is an active-site residue. Substrate contacts are provided by residues lysine 129, aspartate 159, and 199-202; that span reads TYYE.

It belongs to the class I-like SAM-binding methyltransferase superfamily. TrmB family.

It catalyses the reaction guanosine(46) in tRNA + S-adenosyl-L-methionine = N(7)-methylguanosine(46) in tRNA + S-adenosyl-L-homocysteine. It functions in the pathway tRNA modification; N(7)-methylguanine-tRNA biosynthesis. Its function is as follows. Catalyzes the formation of N(7)-methylguanine at position 46 (m7G46) in tRNA. The sequence is that of tRNA (guanine-N(7)-)-methyltransferase from Bacteroides fragilis (strain YCH46).